A 58-amino-acid chain; its full sequence is Large ribosomal subunit protein eL24 (58 aa).

Residues Cys6, Cys9, Cys32, and Cys36 each coordinate Zn(2+). The C4-type zinc finger occupies 6–36; the sequence is CSFCGAEIPPGYGIMYVRNDGTIQRYCSRKC.

This sequence belongs to the eukaryotic ribosomal protein eL24 family. Part of the 50S ribosomal subunit. Forms a cluster with proteins L3 and L14. It depends on Zn(2+) as a cofactor.

Functionally, binds to the 23S rRNA. The sequence is that of Large ribosomal subunit protein eL24 from Pyrobaculum neutrophilum (strain DSM 2338 / JCM 9278 / NBRC 100436 / V24Sta) (Thermoproteus neutrophilus).